The primary structure comprises 300 residues: tRNA dimethylallyltransferase (300 aa).

9-16 (GTTASGKS) contributes to the ATP binding site. A substrate-binding site is contributed by 11 to 16 (TASGKS). An interaction with substrate tRNA region spans residues 34-37 (DSLC).

It belongs to the IPP transferase family. As to quaternary structure, monomer. Requires Mg(2+) as cofactor.

The enzyme catalyses adenosine(37) in tRNA + dimethylallyl diphosphate = N(6)-dimethylallyladenosine(37) in tRNA + diphosphate. Its function is as follows. Catalyzes the transfer of a dimethylallyl group onto the adenine at position 37 in tRNAs that read codons beginning with uridine, leading to the formation of N6-(dimethylallyl)adenosine (i(6)A). The protein is tRNA dimethylallyltransferase of Campylobacter fetus subsp. fetus (strain 82-40).